The primary structure comprises 238 residues: Transcription termination/antitermination protein NusG (238 aa).

The protein belongs to the NusG family.

In terms of biological role, participates in transcription elongation, termination and antitermination. This Mycobacterium tuberculosis (strain CDC 1551 / Oshkosh) protein is Transcription termination/antitermination protein NusG.